Here is a 101-residue protein sequence, read N- to C-terminus: Protein S100-A4 (101 aa).

At Ala2 the chain carries N-acetylalanine. 2 EF-hand domains span residues 12 to 47 (IVST…SFLG) and 50 to 85 (TDEA…IAMM). Positions 28 and 33 each coordinate Ca(2+). Lys35 carries the N6-acetyllysine modification. Residues Asp63, Asn65, Asp67, Glu69, and Glu74 each contribute to the Ca(2+) site.

The protein belongs to the S-100 family. As to quaternary structure, homodimer. Interacts with PPFIBP1 in a calcium-dependent mode. Interacts with PGLYRP1; this complex acts as a chemoattractant that promotes lymphocyte movement. Interacts with MYH9; this interaction increases cell motility. Interacts with Annexin 2/ANXA2. Interacts with TP53; this interaction promotes TP53 degradation. Interacts with CCR5 and CXCR3. Interacts with FCGR3A; this interaction inhibits PKC-dependent phosphorylation of FCGR3A. Specifically expressed in different metastatic cells.

Its subcellular location is the secreted. It is found in the nucleus. The protein resides in the cytoplasm. Its function is as follows. Calcium-binding protein that plays a role in various cellular processes including motility, angiogenesis, cell differentiation, apoptosis, and autophagy. Increases cell motility and invasiveness by interacting with non-muscle myosin heavy chain (NMMHC) IIA/MYH9. Mechanistically, promotes filament depolymerization and increases the amount of soluble myosin-IIA, resulting in the formation of stable protrusions facilitating chemotaxis. Also modulates the pro-apoptotic function of TP53 by binding to its C-terminal transactivation domain within the nucleus and reducing its protein levels. Within the extracellular space, stimulates cytokine production including granulocyte colony-stimulating factor and CCL24 from T-lymphocytes. In addition, stimulates T-lymphocyte chemotaxis by acting as a chemoattractant complex with PGLYRP1 that promotes lymphocyte migration via CCR5 and CXCR3 receptors. The chain is Protein S100-A4 (S100a4) from Mus musculus (Mouse).